Here is a 259-residue protein sequence, read N- to C-terminus: Diaminopimelate epimerase (259 aa).

3 residues coordinate substrate: asparagine 14, glutamine 42, and asparagine 60. The Proton donor role is filled by cysteine 69. Substrate contacts are provided by residues 70–71 (GN), asparagine 151, asparagine 184, and 202–203 (ER). Cysteine 211 functions as the Proton acceptor in the catalytic mechanism. 212-213 (GS) provides a ligand contact to substrate.

The protein belongs to the diaminopimelate epimerase family. Homodimer.

Its subcellular location is the cytoplasm. The enzyme catalyses (2S,6S)-2,6-diaminopimelate = meso-2,6-diaminopimelate. Its pathway is amino-acid biosynthesis; L-lysine biosynthesis via DAP pathway; DL-2,6-diaminopimelate from LL-2,6-diaminopimelate: step 1/1. Its function is as follows. Catalyzes the stereoinversion of LL-2,6-diaminopimelate (L,L-DAP) to meso-diaminopimelate (meso-DAP), a precursor of L-lysine and an essential component of the bacterial peptidoglycan. This is Diaminopimelate epimerase from Wolbachia sp. subsp. Brugia malayi (strain TRS).